A 213-amino-acid polypeptide reads, in one-letter code: Protein Syd (213 aa).

It belongs to the Syd family.

Its subcellular location is the cell inner membrane. Functionally, interacts with the SecY protein in vivo. May bind preferentially to an uncomplexed state of SecY, thus functioning either as a chelating agent for excess SecY in the cell or as a regulatory factor that negatively controls the translocase function. The sequence is that of Protein Syd from Shewanella pealeana (strain ATCC 700345 / ANG-SQ1).